The sequence spans 354 residues: uncharacterized protein (354 aa).

The disordered stretch occupies residues 96–130; the sequence is QVCPASAPNGKRAMKIPKVKEPRGENSSKKSSADQ. Residues 113–127 show a composition bias toward basic and acidic residues; the sequence is KVKEPRGENSSKKSS.

This is an uncharacterized protein from Caenorhabditis elegans.